The primary structure comprises 184 residues: Rubrerythrin-2 (184 aa).

In terms of domain architecture, Ferritin-like diiron spans 2-146 (SVKNAMTADF…DAQDSAKENK (145 aa)). Glu19, Glu52, Glu94, Glu97, Glu128, His131, Cys156, Cys159, Cys171, and Cys174 together coordinate Fe(3+). A Rubredoxin-like domain is found at 151-184 (GKVYICPVCGFTTLDENIEQCPICGVKKDKFQAF).

Fe(3+) serves as cofactor.

It carries out the reaction H2O2 + NADH + H(+) = NAD(+) + 2 H2O. Rubredoxin (Rd) increases the NADH consumption rate by serving as an intermediary electron-transfer shuttle between NROR and Rbr2. Its function is as follows. Functions as the terminal component of an NADH peroxidase (NADH:H(2)O(2) oxidoreductase) when using NADH:rubredoxin oxidoreductase (NROR) as the electron transport intermediary from NADH to Rbr2. This chain is Rubrerythrin-2 (rbr2), found in Clostridium acetobutylicum (strain ATCC 824 / DSM 792 / JCM 1419 / IAM 19013 / LMG 5710 / NBRC 13948 / NRRL B-527 / VKM B-1787 / 2291 / W).